Consider the following 478-residue polypeptide: Cytochrome c-552 (478 aa).

The N-terminal stretch at 1–26 (MTRIKINARRIFSLLIPFFFFTSVHA) is a signal peptide. Residue His-94 coordinates heme c. Positions 122, 125, and 126 each coordinate heme. The heme c site is built by Cys-160, Cys-163, His-164, Cys-209, Cys-212, and His-213. Ca(2+)-binding residues include Glu-215, Tyr-216, Lys-261, and Gln-263. Tyr-216 contributes to the substrate binding site. Substrate is bound at residue His-264. Heme c is bound by residues His-275, Cys-282, Cys-285, His-286, His-301, Cys-314, Cys-317, His-318, and His-393.

The protein belongs to the cytochrome c-552 family. It depends on Ca(2+) as a cofactor. Heme c is required as a cofactor.

Its subcellular location is the periplasm. The catalysed reaction is 6 Fe(III)-[cytochrome c] + NH4(+) + 2 H2O = 6 Fe(II)-[cytochrome c] + nitrite + 8 H(+). The protein operates within nitrogen metabolism; nitrate reduction (assimilation). Its function is as follows. Catalyzes the reduction of nitrite to ammonia, consuming six electrons in the process. The chain is Cytochrome c-552 from Escherichia coli (strain ATCC 8739 / DSM 1576 / NBRC 3972 / NCIMB 8545 / WDCM 00012 / Crooks).